A 255-amino-acid chain; its full sequence is Small ribosomal subunit protein uS2 (255 aa).

Belongs to the universal ribosomal protein uS2 family.

This is Small ribosomal subunit protein uS2 (rpsB) from Streptococcus pyogenes serotype M1.